An 841-amino-acid chain; its full sequence is Protein translocase subunit SecA (841 aa).

ATP contacts are provided by residues Q85, 103–107 (GEGKT), and D492. A disordered region spans residues 790-814 (IQGQTTAHQPKEGDEEKQAKKKPVR). Basic and acidic residues predominate over residues 798 to 807 (QPKEGDEEKQ). Residues C825, C827, C836, and C837 each coordinate Zn(2+).

Belongs to the SecA family. In terms of assembly, monomer and homodimer. Part of the essential Sec protein translocation apparatus which comprises SecA, SecYEG and auxiliary proteins SecDF. Other proteins may also be involved. Zn(2+) serves as cofactor.

The protein localises to the cell membrane. Its subcellular location is the cytoplasm. The enzyme catalyses ATP + H2O + cellular proteinSide 1 = ADP + phosphate + cellular proteinSide 2.. In terms of biological role, part of the Sec protein translocase complex. Interacts with the SecYEG preprotein conducting channel. Has a central role in coupling the hydrolysis of ATP to the transfer of proteins into and across the cell membrane, serving as an ATP-driven molecular motor driving the stepwise translocation of polypeptide chains across the membrane. The protein is Protein translocase subunit SecA of Bacillus licheniformis (strain ATCC 14580 / DSM 13 / JCM 2505 / CCUG 7422 / NBRC 12200 / NCIMB 9375 / NCTC 10341 / NRRL NRS-1264 / Gibson 46).